Consider the following 107-residue polypeptide: Nucleoid-associated protein BAbS19_I00290 (107 aa).

It belongs to the YbaB/EbfC family. In terms of assembly, homodimer.

It is found in the cytoplasm. Its subcellular location is the nucleoid. Its function is as follows. Binds to DNA and alters its conformation. May be involved in regulation of gene expression, nucleoid organization and DNA protection. This is Nucleoid-associated protein BAbS19_I00290 from Brucella abortus (strain S19).